Consider the following 360-residue polypeptide: Peptide chain release factor 1 (360 aa).

The residue at position 235 (Q235) is an N5-methylglutamine.

The protein belongs to the prokaryotic/mitochondrial release factor family. Methylated by PrmC. Methylation increases the termination efficiency of RF1.

Its subcellular location is the cytoplasm. Functionally, peptide chain release factor 1 directs the termination of translation in response to the peptide chain termination codons UAG and UAA. The chain is Peptide chain release factor 1 from Cupriavidus pinatubonensis (strain JMP 134 / LMG 1197) (Cupriavidus necator (strain JMP 134)).